A 96-amino-acid chain; its full sequence is Large ribosomal subunit protein bL28 (96 aa).

This sequence belongs to the bacterial ribosomal protein bL28 family.

This is Large ribosomal subunit protein bL28 from Methylobacterium nodulans (strain LMG 21967 / CNCM I-2342 / ORS 2060).